A 448-amino-acid polypeptide reads, in one-letter code: Putative vacuolar cation/proton exchanger 6 (448 aa).

Over 31–81 (MGLVNEVELKSLLEQETDSPQTNAASLMEQGSLRERRAKAPRNSVVQSFKI) the chain is Cytoplasmic. Residues 82–102 (VILSNKLNLLLPFGPLAILVH) form a helical membrane-spanning segment. At 103-109 (YLTDNKG) the chain is on the extracellular side. A helical membrane pass occupies residues 110 to 130 (WFFLLSLVGITPLAERLGYAT). Topologically, residues 131–141 (EQLSCYTGATV) are cytoplasmic. Residues 142-162 (GGLLNATFGNVIELIISIIAL) form a helical membrane-spanning segment. Positions 150 to 185 (GNVIELIISIIALKNGMIRVVQLTLLGSILSNILLV) are cation selection. At 163–178 (KNGMIRVVQLTLLGSI) the chain is on the extracellular side. Residues 179 to 199 (LSNILLVLGCAFFCGGLVFPG) traverse the membrane as a helical segment. Topologically, residues 200–209 (KDQVFDKRNA) are cytoplasmic. Residues 210 to 230 (VVSSGMLLMAVMGLLFPTFLH) traverse the membrane as a helical segment. The Extracellular segment spans residues 231–243 (YTHSEVHAGSSEL). The chain crosses the membrane as a helical span at residues 244–264 (ALSRFISCIMLVAYAAYLFFQ). The Cytoplasmic portion of the chain corresponds to 265–295 (LKSQPSFYTEKTNQNEETSNDDEDPEISKWE). A helical transmembrane segment spans residues 296–316 (AIIWLSIFTAWVSLLSGYLVD). Over 317–334 (AIEGTSVSWKIPISFISV) the chain is Extracellular. A helical transmembrane segment spans residues 335-355 (ILLPIVGNAAEHAGAIMFAMK). The interval 341–376 (GNAAEHAGAIMFAMKDKLDLSLGVAIGSSIQISMFA) is cation selection. At 356 to 363 (DKLDLSLG) the chain is on the cytoplasmic side. The helical transmembrane segment at 364–384 (VAIGSSIQISMFAVPFCVVIG) threads the bilayer. Residues 385-393 (WMMGAQMDL) lie on the Extracellular side of the membrane. The chain crosses the membrane as a helical span at residues 394–414 (NLQLFETATLLITVIVVAFFL). Residues 415 to 425 (QLEGTSNYFKR) are Cytoplasmic-facing. Residues 426–446 (LMLILCYLIVAASFFVHEDPH) traverse the membrane as a helical segment. Over 447 to 448 (QG) the chain is Extracellular.

It belongs to the Ca(2+):cation antiporter (CaCA) (TC 2.A.19) family. Cation/proton exchanger (CAX) subfamily.

It localises to the vacuole membrane. Vacuolar cation/proton exchanger (CAX). Translocates Ca(2+) and other metal ions into vacuoles using the proton gradient formed by H(+)-ATPase and H(+)-pyrophosphatase. The chain is Putative vacuolar cation/proton exchanger 6 (CAX6) from Arabidopsis thaliana (Mouse-ear cress).